The sequence spans 322 residues: 4-diphosphocytidyl-2-C-methyl-D-erythritol kinase (322 aa).

Lysine 18 is a catalytic residue. Residue 130-140 (PMGAGLGGGSS) coordinates ATP. The active site involves aspartate 172.

This sequence belongs to the GHMP kinase family. IspE subfamily.

It catalyses the reaction 4-CDP-2-C-methyl-D-erythritol + ATP = 4-CDP-2-C-methyl-D-erythritol 2-phosphate + ADP + H(+). It functions in the pathway isoprenoid biosynthesis; isopentenyl diphosphate biosynthesis via DXP pathway; isopentenyl diphosphate from 1-deoxy-D-xylulose 5-phosphate: step 3/6. In terms of biological role, catalyzes the phosphorylation of the position 2 hydroxy group of 4-diphosphocytidyl-2C-methyl-D-erythritol. The sequence is that of 4-diphosphocytidyl-2-C-methyl-D-erythritol kinase from Psychrobacter arcticus (strain DSM 17307 / VKM B-2377 / 273-4).